Here is a 297-residue protein sequence, read N- to C-terminus: UDP-N-acetylenolpyruvoylglucosamine reductase (297 aa).

The FAD-binding PCMH-type domain occupies R22–G195. R169 is an active-site residue. S223 acts as the Proton donor in catalysis. The active site involves E293.

It belongs to the MurB family. The cofactor is FAD.

The protein resides in the cytoplasm. It carries out the reaction UDP-N-acetyl-alpha-D-muramate + NADP(+) = UDP-N-acetyl-3-O-(1-carboxyvinyl)-alpha-D-glucosamine + NADPH + H(+). It participates in cell wall biogenesis; peptidoglycan biosynthesis. Functionally, cell wall formation. The chain is UDP-N-acetylenolpyruvoylglucosamine reductase from Chloroflexus aurantiacus (strain ATCC 29364 / DSM 637 / Y-400-fl).